The sequence spans 600 residues: Melanophilin (600 aa).

Residues 4–124 form the RabBD domain; that stretch reads KLDLSKLTDE…IGSLEWYYEH (121 aa). The FYVE-type zinc-finger motif lies at 64–107; sequence CARCLQPYQLLVNSKRQCLECGLFTCKSCGRVHPEEQGWICDPC. Disordered regions lie at residues 146 to 277, 390 to 465, 499 to 541, and 553 to 600; these read QGGA…AELC, EELT…LSEL, TVKP…AKAM, and NSLK…AHQS. Composition is skewed to basic and acidic residues over residues 232–243 and 409–420; these read CSEKAAPHKAEG and KDEKAEPNRDKS. Residues 373–496 are a coiled coil; the sequence is GVRTEADVEE…ESRIAALRAA (124 aa). Residues 558–569 show a composition bias toward basic and acidic residues; sequence QGKDDDSFDRKS.

In terms of assembly, binds RAB27A that has been activated by GTP-binding via its N-terminus. Binds MYO5A via its C-terminal coiled coil domain.

It localises to the cytoplasm. Functionally, rab effector protein involved in melanosome transport. Serves as link between melanosome-bound RAB27A and the motor protein MYO5A. The polypeptide is Melanophilin (MLPH) (Homo sapiens (Human)).